The primary structure comprises 330 residues: Ketol-acid reductoisomerase (NADP(+)) (330 aa).

In terms of domain architecture, KARI N-terminal Rossmann spans 1 to 181 (MKVFYDSDFK…GLSRAGVIQT (181 aa)). NADP(+) contacts are provided by residues 24–27 (YGSQ), arginine 47, serine 52, and 82–85 (DELQ). Histidine 107 is an active-site residue. Glycine 133 serves as a coordination point for NADP(+). Positions 182-327 (TFKEETETDL…AKLRKMCGLE (146 aa)) constitute a KARI C-terminal knotted domain. 4 residues coordinate Mg(2+): aspartate 190, glutamate 194, glutamate 226, and glutamate 230. Serine 251 is a binding site for substrate.

Belongs to the ketol-acid reductoisomerase family. It depends on Mg(2+) as a cofactor.

The catalysed reaction is (2R)-2,3-dihydroxy-3-methylbutanoate + NADP(+) = (2S)-2-acetolactate + NADPH + H(+). The enzyme catalyses (2R,3R)-2,3-dihydroxy-3-methylpentanoate + NADP(+) = (S)-2-ethyl-2-hydroxy-3-oxobutanoate + NADPH + H(+). It functions in the pathway amino-acid biosynthesis; L-isoleucine biosynthesis; L-isoleucine from 2-oxobutanoate: step 2/4. Its pathway is amino-acid biosynthesis; L-valine biosynthesis; L-valine from pyruvate: step 2/4. In terms of biological role, involved in the biosynthesis of branched-chain amino acids (BCAA). Catalyzes an alkyl-migration followed by a ketol-acid reduction of (S)-2-acetolactate (S2AL) to yield (R)-2,3-dihydroxy-isovalerate. In the isomerase reaction, S2AL is rearranged via a Mg-dependent methyl migration to produce 3-hydroxy-3-methyl-2-ketobutyrate (HMKB). In the reductase reaction, this 2-ketoacid undergoes a metal-dependent reduction by NADPH to yield (R)-2,3-dihydroxy-isovalerate. In Methanococcus maripaludis (strain C6 / ATCC BAA-1332), this protein is Ketol-acid reductoisomerase (NADP(+)).